An 87-amino-acid chain; its full sequence is Small ribosomal subunit protein uS17 (87 aa).

It belongs to the universal ribosomal protein uS17 family. As to quaternary structure, part of the 30S ribosomal subunit.

One of the primary rRNA binding proteins, it binds specifically to the 5'-end of 16S ribosomal RNA. The sequence is that of Small ribosomal subunit protein uS17 from Chromobacterium violaceum (strain ATCC 12472 / DSM 30191 / JCM 1249 / CCUG 213 / NBRC 12614 / NCIMB 9131 / NCTC 9757 / MK).